Consider the following 1709-residue polypeptide: Protein SHORTAGE IN CHIASMATA 1 homolog (1709 aa).

Composition is skewed to basic and acidic residues over residues 532–542 (PKLQDEDKHSD), 552–568 (DPQK…EGGT), and 1601–1613 (ESFR…DTPS). Disordered stretches follow at residues 532 to 586 (PKLQ…SSFP) and 1566 to 1662 (KRKA…DPTW).

The protein belongs to the XPF family. In terms of assembly, interacts (via C-terminus) with PTD. Interacts with ZIP4. Highly expressed in anthers and pistil during meiosis. Expressed in pollen mother cells (PMCs) during meiosis. Expressed at low levels in roots, shoots, leaves, flowers, and glumes.

Its subcellular location is the chromosome. It localises to the nucleus. It is found in the cytoplasm. The protein resides in the cell membrane. Its function is as follows. Essential for normal crossover (CO) formation during meiosis. Essential component for the formation of class I meiotic COs. Interacts with PTD, another meiotic component, to regulate CO formation, possibly by stabilizing the recombination intermediates during meiosis. SHOC1 and PTD may form transient heterotrimeric or heterotetrameric complexes with HEI10 and/or ZIP4 to promote class I COs formation. Does not seem to be involved in early meiotic recombination steps involving double-strand break (DSB) formation, processing, and single-strand invasion. Does not seem to be involved in homologous pairing or synaptonemal complex (SC) assembly. The chain is Protein SHORTAGE IN CHIASMATA 1 homolog from Oryza sativa subsp. japonica (Rice).